A 428-amino-acid polypeptide reads, in one-letter code: Tol-Pal system protein TolB (428 aa).

The N-terminal stretch at Met1–Ala23 is a signal peptide.

It belongs to the TolB family. As to quaternary structure, the Tol-Pal system is composed of five core proteins: the inner membrane proteins TolA, TolQ and TolR, the periplasmic protein TolB and the outer membrane protein Pal. They form a network linking the inner and outer membranes and the peptidoglycan layer.

It localises to the periplasm. Part of the Tol-Pal system, which plays a role in outer membrane invagination during cell division and is important for maintaining outer membrane integrity. This Alkalilimnicola ehrlichii (strain ATCC BAA-1101 / DSM 17681 / MLHE-1) protein is Tol-Pal system protein TolB.